The primary structure comprises 185 residues: NADH-quinone oxidoreductase subunit B (185 aa).

Cys37, Cys38, Cys103, and Cys132 together coordinate [4Fe-4S] cluster.

This sequence belongs to the complex I 20 kDa subunit family. In terms of assembly, NDH-1 is composed of 14 different subunits. Subunits NuoB, C, D, E, F, and G constitute the peripheral sector of the complex. Requires [4Fe-4S] cluster as cofactor.

It is found in the cell membrane. It catalyses the reaction a quinone + NADH + 5 H(+)(in) = a quinol + NAD(+) + 4 H(+)(out). Its function is as follows. NDH-1 shuttles electrons from NADH, via FMN and iron-sulfur (Fe-S) centers, to quinones in the respiratory chain. The immediate electron acceptor for the enzyme in this species is believed to be a menaquinone. Couples the redox reaction to proton translocation (for every two electrons transferred, four hydrogen ions are translocated across the cytoplasmic membrane), and thus conserves the redox energy in a proton gradient. The polypeptide is NADH-quinone oxidoreductase subunit B (Thermobifida fusca (strain YX)).